The sequence spans 319 residues: Glutathione synthetase (319 aa).

An ATP-grasp domain is found at 127–311; the sequence is KIFVTEFADL…VASLLWDAIE (185 aa). ATP is bound at residue 153–209; the sequence is RNEMGDIILKPLYGNGGAGVFHSARDDRNFSSLLEMFGQMFREPYIAQEYLPDVRKG. Positions 282 and 284 each coordinate Mg(2+).

Belongs to the prokaryotic GSH synthase family. Mg(2+) is required as a cofactor. It depends on Mn(2+) as a cofactor.

The enzyme catalyses gamma-L-glutamyl-L-cysteine + glycine + ATP = glutathione + ADP + phosphate + H(+). The protein operates within sulfur metabolism; glutathione biosynthesis; glutathione from L-cysteine and L-glutamate: step 2/2. The protein is Glutathione synthetase of Agrobacterium fabrum (strain C58 / ATCC 33970) (Agrobacterium tumefaciens (strain C58)).